A 126-amino-acid chain; its full sequence is C-type natriuretic peptide 1 (126 aa).

A signal peptide spans 1-22 (MLCPALLCAALLLLTPVEITDA). The propeptide occupies 23-104 (RALQQPSDAA…KRAEPDRSRR (82 aa)). Cysteines 110 and 126 form a disulfide.

This sequence belongs to the natriuretic peptide family.

The protein localises to the secreted. In terms of biological role, exhibits natriuretic and vasodepressant activity. Has cGMP-stimulating activity. May help to regulate body fluid homeostasis in a variety of aquatic environments. This chain is C-type natriuretic peptide 1, found in Takifugu rubripes (Japanese pufferfish).